Reading from the N-terminus, the 711-residue chain is Polyribonucleotide nucleotidyltransferase (711 aa).

An FFRR loop; important for RNA binding region spans residues 77–80 (FFRR). The interval 327-331 (LDVRT) is interaction with RNase E. Residues Asp-486 and Asp-492 each contribute to the Mg(2+) site. The 60-residue stretch at 553-612 (PRIHTIKINPDKIKDVIGKGGSVIRALTEETGTTIEIEDDGTVKIAATDGEKAKHAIRRI) folds into the KH domain. The S1 motif domain occupies 622-690 (GRVYTGKVTR…RQGRIRLSIK (69 aa)). The interval 689–711 (IKEATEQSQPAAAPEAPAAEQGE) is disordered. The span at 694-711 (EQSQPAAAPEAPAAEQGE) shows a compositional bias: low complexity.

Belongs to the polyribonucleotide nucleotidyltransferase family. Component of the RNA degradosome, which is a multiprotein complex involved in RNA processing and mRNA degradation. Interacts with RNase E (rne). Homotrimer. The homotrimer forms a ring-like structure with a central channel, where RNA molecules can bind. RNA molecules bind between neighboring subunits. Might interact with YicC. It depends on Mg(2+) as a cofactor. Mn(2+) is required as a cofactor.

The protein resides in the cytoplasm. The enzyme catalyses RNA(n+1) + phosphate = RNA(n) + a ribonucleoside 5'-diphosphate. Involved in mRNA degradation. Catalyzes the phosphorolysis of single-stranded polyribonucleotides processively in the 3'- to 5'-direction. Also involved, along with RNase II, in tRNA processing. RNases II and R contribute to rRNA degradation during starvation, while RNase R and PNPase are the major contributors to quality control of rRNA during steady state growth. Contributes to degradation of some small RNAs (sRNA). In Escherichia coli (strain K12), this protein is Polyribonucleotide nucleotidyltransferase.